A 136-amino-acid chain; its full sequence is Histone H3 (136 aa).

A disordered region spans residues 1 to 42; it reads MARTKQTARKSTGGKAPRKQLATKAAAKSAPATGGVKKPHRY. N6-methylated lysine is present on Lys5. An N6-acetyllysine; alternate modification is found at Lys10. At Lys10 the chain carries N6-methylated lysine; alternate. The residue at position 11 (Ser11) is a Phosphoserine. 2 positions are modified to N6-acetyllysine: Lys15 and Lys24. Low complexity predominate over residues 22 to 33; the sequence is ATKAAAKSAPAT. An N6-methylated lysine mark is found at Lys28, Lys37, and Lys80.

Belongs to the histone H3 family. As to quaternary structure, the nucleosome is a histone octamer containing two molecules each of H2A, H2B, H3 and H4 assembled in one H3-H4 heterotetramer and two H2A-H2B heterodimers. The octamer wraps approximately 147 bp of DNA. Post-translationally, acetylation is generally linked to gene activation. In terms of processing, methylation at Lys-5 is linked to gene activation. Methylation at Lys-10 is linked to gene repression.

It is found in the nucleus. The protein localises to the chromosome. Core component of nucleosome. Nucleosomes wrap and compact DNA into chromatin, limiting DNA accessibility to the cellular machineries which require DNA as a template. Histones thereby play a central role in transcription regulation, DNA repair, DNA replication and chromosomal stability. DNA accessibility is regulated via a complex set of post-translational modifications of histones, also called histone code, and nucleosome remodeling. The polypeptide is Histone H3 (Acropora formosa (Staghorn coral)).